Consider the following 985-residue polypeptide: Bifunctional glutamine synthetase adenylyltransferase/adenylyl-removing enzyme (985 aa).

The tract at residues 1 to 472 (MTSSAPGNAD…HYARLFEGDP (472 aa)) is adenylyl removase. The interval 477–985 (SLPPVNYGAG…RRVFTSLLEE (509 aa)) is adenylyl transferase.

This sequence belongs to the GlnE family. Requires Mg(2+) as cofactor.

The catalysed reaction is [glutamine synthetase]-O(4)-(5'-adenylyl)-L-tyrosine + phosphate = [glutamine synthetase]-L-tyrosine + ADP. The enzyme catalyses [glutamine synthetase]-L-tyrosine + ATP = [glutamine synthetase]-O(4)-(5'-adenylyl)-L-tyrosine + diphosphate. Functionally, involved in the regulation of glutamine synthetase GlnA, a key enzyme in the process to assimilate ammonia. When cellular nitrogen levels are high, the C-terminal adenylyl transferase (AT) inactivates GlnA by covalent transfer of an adenylyl group from ATP to specific tyrosine residue of GlnA, thus reducing its activity. Conversely, when nitrogen levels are low, the N-terminal adenylyl removase (AR) activates GlnA by removing the adenylyl group by phosphorolysis, increasing its activity. The regulatory region of GlnE binds the signal transduction protein PII (GlnB) which indicates the nitrogen status of the cell. The protein is Bifunctional glutamine synthetase adenylyltransferase/adenylyl-removing enzyme of Bradyrhizobium sp. (strain BTAi1 / ATCC BAA-1182).